A 215-amino-acid polypeptide reads, in one-letter code: Protein C' (215 aa).

A disordered region spans residues 12–34; it reads MPSFLKKILKLRGRRQEDESRSR. The interval 15–22 is involved in self-degradation and in host STAT1 degradation; the sequence is FLKKILKL.

The protein belongs to the respirovirus protein C family. The different isoforms interact (via C-terminus) with unphosphorylated and phosphorylated human STAT1 (via N-terminus), favoring the formation of parallel STAT1 homodimers. The different isoforms do not interact with host STAT2. C protein interacts with L protein; this interaction has an inhibitory effect on viral transcription and replication. In terms of processing, protein Y2 is produced not only by alternative initiation, but also by proteolytic cleavage of C'. Only alternative initiation is detected in vitro, whereas in vivo cleavage seems to be predominant.

The protein resides in the host cytoplasm. The different products prevent the establishment of cellular antiviral state by blocking the interferon-alpha/beta (IFN-alpha/beta) and IFN-gamma signaling pathways. They inhibit IFN-alpha/beta induced tyrosine phosphorylation of STAT1 and STAT2. Blocking the IFN-alpha/beta pathway requires binding to STAT1 in the cytoplasm. They inhibit IFN-gamma induced serine phosphorylation of STAT1. Block the IFN-gamma pathway by binding to and stabilizing the parallel form of the STAT1 dimer, further inducing high-molecular-weight complex formation and inhibition of transcription by IFN-gamma. May also have a role in preventing the cell to enter apoptosis. Modulate regulation of viral transcription and replication. Overexpression inhibits the viral RNA polymerase. The absence of all C', C and Y2 proteins leads to viral delayed growth. Plays an important role in virion particles release. Modulates virion shape. The chain is Protein C' (P/V/C) from Cavia cutleri (Guinea pig).